The sequence spans 112 residues: uncharacterized protein (112 aa).

The region spanning 6 to 60 is the HTH cro/C1-type domain; the sequence is LRQLRKAHKLTMEQLAEKIGIAKSSYGGYEAESKKPPLDKLVILARLYDVSVDYI. The segment at residues 17–36 is a DNA-binding region (H-T-H motif); the sequence is MEQLAEKIGIAKSSYGGYEA.

This is an uncharacterized protein from Bacillus subtilis (strain 168).